We begin with the raw amino-acid sequence, 131 residues long: Small ribosomal subunit protein uS11 (131 aa).

It belongs to the universal ribosomal protein uS11 family. Part of the 30S ribosomal subunit. Interacts with proteins S7 and S18. Binds to IF-3.

Located on the platform of the 30S subunit, it bridges several disparate RNA helices of the 16S rRNA. Forms part of the Shine-Dalgarno cleft in the 70S ribosome. This chain is Small ribosomal subunit protein uS11, found in Deinococcus geothermalis (strain DSM 11300 / CIP 105573 / AG-3a).